Consider the following 412-residue polypeptide: B3 domain-containing protein Os02g0683500 (412 aa).

The tract at residues 1–87 (MEFTTSSRFS…GGGGGGGGEA (87 aa)) is disordered. Low complexity predominate over residues 30–65 (TATAEAAPAPTSSSSSPAHHAASASASASASGSSTP). The span at 73–86 (GASGSGGGGGGGGE) shows a compositional bias: gly residues. The TF-B3 DNA-binding region spans 96 to 200 (FDKVVTPSDV…RHRLFIDWKR (105 aa)). Residues 374–412 (RLLELPPHHHHGAESSAASSPSSSSSSKRDAHSALDLDL) are disordered. The segment covering 387 to 399 (ESSAASSPSSSSS) has biased composition (low complexity). Residues 400–412 (SKRDAHSALDLDL) show a composition bias toward basic and acidic residues.

It localises to the nucleus. The protein is B3 domain-containing protein Os02g0683500 of Oryza sativa subsp. japonica (Rice).